The chain runs to 361 residues: S-adenosylmethionine:tRNA ribosyltransferase-isomerase (361 aa).

It belongs to the QueA family. In terms of assembly, monomer.

Its subcellular location is the cytoplasm. The enzyme catalyses 7-aminomethyl-7-carbaguanosine(34) in tRNA + S-adenosyl-L-methionine = epoxyqueuosine(34) in tRNA + adenine + L-methionine + 2 H(+). Its pathway is tRNA modification; tRNA-queuosine biosynthesis. In terms of biological role, transfers and isomerizes the ribose moiety from AdoMet to the 7-aminomethyl group of 7-deazaguanine (preQ1-tRNA) to give epoxyqueuosine (oQ-tRNA). This chain is S-adenosylmethionine:tRNA ribosyltransferase-isomerase, found in Actinobacillus pleuropneumoniae serotype 5b (strain L20).